The chain runs to 270 residues: Fluoride-specific ion channel FluC 1 (270 aa).

The next 4 helical transmembrane spans lie at 4 to 24 (IIIL…FIML), 35 to 55 (LDIL…TALY), 67 to 87 (IIGT…YGSV), and 96 to 116 (AFLI…VAVL). Residues Gly-74 and Ser-77 each contribute to the Na(+) site.

The protein belongs to the fluoride channel Fluc/FEX (TC 1.A.43) family.

The protein resides in the cell inner membrane. It catalyses the reaction fluoride(in) = fluoride(out). Its activity is regulated as follows. Na(+) is not transported, but it plays an essential structural role and its presence is essential for fluoride channel function. Functionally, fluoride-specific ion channel. Important for reducing fluoride concentration in the cell, thus reducing its toxicity. This Brucella abortus biovar 1 (strain 9-941) protein is Fluoride-specific ion channel FluC 1.